The following is a 316-amino-acid chain: PHD finger protein 20-like protein 1 (316 aa).

Residues 11-71 (ITFEIGARLE…SNRLRPLERP (61 aa)) enclose the Tudor 1 domain. Residues Lys75 and Lys79 each participate in a glycyl lysine isopeptide (Lys-Gly) (interchain with G-Cter in SUMO2) cross-link. The Tudor 2 domain occupies 85–141 (FDFKAGEEVLARWTDCRYYPAKIEAINKEGTFTVQFYDGVIRCLKRMHIKAMPEDAK). A disordered region spans residues 183–237 (AKNKTGNKPRTSANSNKDKEKDERKWFKVPSKKEETSTSITTPEVEKKEDLPTSS). Polar residues predominate over residues 186–197 (KTGNKPRTSANS). Basic and acidic residues predominate over residues 198–218 (NKDKEKDERKWFKVPSKKEET).

In terms of assembly, interacts with methylated DNMT1 (DNMT1K142me1). Interacts with SOX2.

Its subcellular location is the nucleus. In terms of biological role, is a negative regulator of proteasomal degradation of a set of methylated proteins, including DNMT1 and SOX2. Involved in the maintainance of embryonic stem cells pluripotency, through the regulation of SOX2 levels. In Bos taurus (Bovine), this protein is PHD finger protein 20-like protein 1 (PHF20L1).